We begin with the raw amino-acid sequence, 510 residues long: ATP synthase subunit alpha (510 aa).

Residue 169-176 (GDRQTGKT) participates in ATP binding.

It belongs to the ATPase alpha/beta chains family. In terms of assembly, F-type ATPases have 2 components, CF(1) - the catalytic core - and CF(0) - the membrane proton channel. CF(1) has five subunits: alpha(3), beta(3), gamma(1), delta(1), epsilon(1). CF(0) has three main subunits: a(1), b(2) and c(9-12). The alpha and beta chains form an alternating ring which encloses part of the gamma chain. CF(1) is attached to CF(0) by a central stalk formed by the gamma and epsilon chains, while a peripheral stalk is formed by the delta and b chains.

The protein localises to the cell inner membrane. The enzyme catalyses ATP + H2O + 4 H(+)(in) = ADP + phosphate + 5 H(+)(out). Functionally, produces ATP from ADP in the presence of a proton gradient across the membrane. The alpha chain is a regulatory subunit. This is ATP synthase subunit alpha from Anaeromyxobacter dehalogenans (strain 2CP-1 / ATCC BAA-258).